Reading from the N-terminus, the 278-residue chain is Large ribosomal subunit protein uL2 (278 aa).

Disordered regions lie at residues 29–55 (PEKS…RHQG) and 225–278 (VMNP…NKKR). Residues 258–278 (RSNKKASNKYIVRRRTKNKKR) are compositionally biased toward basic residues.

It belongs to the universal ribosomal protein uL2 family. Part of the 50S ribosomal subunit. Forms a bridge to the 30S subunit in the 70S ribosome. Post-translationally, the N-terminus is blocked. Phosphorylated on serine and threonine residues.

Its function is as follows. One of the primary rRNA binding proteins. Required for association of the 30S and 50S subunits to form the 70S ribosome, for tRNA binding and peptide bond formation. It has been suggested to have peptidyltransferase activity; this is somewhat controversial. Makes several contacts with the 16S rRNA in the 70S ribosome. The protein is Large ribosomal subunit protein uL2 of Streptomyces collinus.